A 331-amino-acid polypeptide reads, in one-letter code: MDFCLLNEKSQIFVHAEPYAVSDYVNQYVGTHSIRLPKGGRPAGRLHHRIFGCLDLCRISYGGSVRVISPGLETCYHLQIILKGHCLWRGYGQEHYFSPGELLLLNPDDQADLTYSEDCEKFIVKLPSVVLDRACSDNNWHKPREGIRFAARHNLQQLDGFINLLGLVCDEAEHTKSMPRVQEHYAGIIASKLLEMLGSNVSREIFSKGNPSFERVVQFIEENLKRNISLERLAELALMSPRSLYTLFEKHAGTTPKNYIRNRKLECIRARLSDPNANVRSVTEMALDYGFFHTGRFAENYRSTFGELPSDTLRRRKMKWLDPEESLPPLP.

An HTH araC/xylS-type domain is found at 214–315; that stretch reads ERVVQFIEEN…GELPSDTLRR (102 aa). 2 DNA-binding regions (H-T-H motif) span residues 231–252 and 282–305; these read ERLA…EKHA and VTEM…RSTF.

It is found in the cytoplasm. Its function is as follows. Regulatory protein of the TOL plasmid xyl operons. XylS activates the xylXYZLTEGFJQKIH operon required for the degradation of toluene, m-xylene and p-xylene. The sequence is that of XylDLEGF operon transcriptional activator 1 (xylS1) from Pseudomonas putida (Arthrobacter siderocapsulatus).